Reading from the N-terminus, the 118-residue chain is Large ribosomal subunit protein bL20 (118 aa).

This sequence belongs to the bacterial ribosomal protein bL20 family.

Functionally, binds directly to 23S ribosomal RNA and is necessary for the in vitro assembly process of the 50S ribosomal subunit. It is not involved in the protein synthesizing functions of that subunit. The chain is Large ribosomal subunit protein bL20 from Proteus mirabilis (strain HI4320).